Here is a 3926-residue protein sequence, read N- to C-terminus: Protein bassoon (3926 aa).

Residues 1 to 161 are disordered; that stretch reads MGNEVSLEGG…PTSPYSVPQI (161 aa). Residue glycine 2 is the site of N-myristoyl glycine attachment. 2 stretches are compositionally biased toward pro residues: residues 15-30 and 58-72; these read PLPP…PGPG and PPVP…PGPG. Residues 23–32 are 5 X 2 AA tandem repeats of P-G; sequence PGPGPGPGPG. The interval 61 to 74 is 7 X 2 AA tandem repeats of P-G; that stretch reads PGPGPGPGPGPGPG. 2 stretches are compositionally biased toward polar residues: residues 90–105 and 130–157; these read RAAS…TTPG and QVDS…SPYS. Serine 145 carries the post-translational modification Phosphoserine. Arginine 148 is modified (omega-N-methylarginine). 2 C4-type zinc fingers span residues 170–193 and 198–220; these read CPIC…CTQC and CNQC…CLNC. Disordered regions lie at residues 231–343 and 366–459; these read TTAP…EQTQ and SVQP…KTMP. The span at 233-243 shows a compositional bias: polar residues; the sequence is APRSKSQQQLH. Phosphoserine is present on residues serine 244 and serine 248. Positions 366 to 377 are enriched in polar residues; the sequence is SVQPEADTQGQP. 2 C4-type zinc fingers span residues 465 to 488 and 493 to 515; these read CPLC…CTTC and CNLC…CLNC. Disordered regions lie at residues 524–927 and 940–1248; these read SLGE…LQGG and GSYG…AEGT. Residues 552–569 are compositionally biased toward low complexity; it reads PLKQKGPQGLGQPSGPLP. 3 tandem repeats follow at residues 571-577, 578-584, and 585-591. The tract at residues 571-591 is 3 X 7 AA tandem repeats of K-A-S-P-[LQ]-[APS]-[KST]; it reads KASPLSTKASPLPSKASPQAK. Residues 619-631 show a composition bias toward pro residues; that stretch reads MPKPPPETTPTPA. Over residues 671 to 680 the composition is skewed to polar residues; that stretch reads QDASRSPQSL. The span at 681–698 shows a compositional bias: low complexity; the sequence is SDTGYSSDGISSSQSEIT. The span at 771 to 787 shows a compositional bias: acidic residues; it reads FDSDEELEDILEEDEDS. Positions 788-797 are enriched in basic and acidic residues; the sequence is AEWRRRREQQ. Positions 851 to 862 are enriched in acidic residues; that stretch reads SAEEDNLEEDDT. Arginine 867 bears the Omega-N-methylarginine mark. Serine 970 is subject to Phosphoserine. Positions 984–1001 are enriched in low complexity; sequence PASTPSYTSGTSPTSLSS. Positions 1037-1092 form a coiled coil; that stretch reads IEDSSEEEELREEEELLREQEKMREVEQQRIRSTARKTRRDKEELRAQRRRERSKT. Positions 1039 to 1052 are enriched in acidic residues; it reads DSSEEEELREEEEL. Phosphoserine occurs at positions 1040 and 1041. Residues 1053–1066 show a composition bias toward basic and acidic residues; it reads LREQEKMREVEQQR. A Phosphoserine modification is found at serine 1090. At threonine 1092 the chain carries Phosphothreonine. Phosphoserine occurs at positions 1098 and 1104. Positions 1107–1122 are enriched in basic and acidic residues; that stretch reads EELRQAAEMEELHRSS. Low complexity-rich tracts occupy residues 1123–1133 and 1163–1180; these read CSEYSPSPSLD and SPTE…SGRP. Positions 1181 to 1208 form a coiled coil; sequence LKSAEEAYEEMMRKAELLQRQQGQAAGA. The span at 1182-1197 shows a compositional bias: basic and acidic residues; the sequence is KSAEEAYEEMMRKAEL. Residues 1199–1209 are compositionally biased toward low complexity; the sequence is QRQQGQAAGAR. The residue at position 1226 (serine 1226) is a Phosphoserine. Positions 1276 to 1294 form a coiled coil; sequence RDLAFAEDKKKEKQFLNAE. Disordered stretches follow at residues 1298-1547 and 1570-1620; these read MDPM…RLVW and RMVH…RVPS. Over residues 1322–1332 the composition is skewed to low complexity; it reads SFSTPTSSDSS. The O-linked (GlcNAc) threonine glycan is linked to threonine 1343. The span at 1346–1355 shows a compositional bias: basic and acidic residues; it reads FAKETQDPLK. Composition is skewed to low complexity over residues 1358 to 1367 and 1377 to 1392; these read SSPASPSSAS and GPGT…CPAG. A glycan (O-linked (GlcNAc) threonine) is linked at threonine 1384. Polar residues predominate over residues 1408 to 1434; sequence RSPSPSSTAHSYGHSPTTANYGSQTED. Over residues 1466 to 1493 the composition is skewed to low complexity; the sequence is PSRAYSYFASSSPPLSPSSPSESPTFSP. Phosphoserine is present on residues serine 1477, serine 1486, and serine 1488. The span at 1570-1598 shows a compositional bias: polar residues; the sequence is RMVHASASTSPLCSPTETQPTTHGYSQTT. A compositionally biased stretch (pro residues) spans 1606–1616; it reads PPEPPGPPGFP. Omega-N-methylarginine is present on residues arginine 1787 and arginine 1791. Arginine 1801 bears the Asymmetric dimethylarginine; alternate mark. Omega-N-methylarginine; alternate is present on arginine 1801. Residue arginine 1813 is modified to Omega-N-methylarginine. The disordered stretch occupies residues 1924–1978; the sequence is PEKSMADAAPPGQSSSPFYGPRDPEPPEPPTYRAQGVVGPGPHEEQRPYPQGLPG. Phosphoserine is present on residues serine 1985 and serine 2041. Arginine 2046 and arginine 2076 each carry omega-N-methylarginine. 3 positions are modified to asymmetric dimethylarginine: arginine 2250, arginine 2260, and arginine 2266. Residues 2287-2309 are disordered; sequence AAKAPGAGGPSRPEMPVGAAREE. An O-linked (GlcNAc) threonine glycan is attached at threonine 2314. The segment covering 2324 to 2341 has biased composition (low complexity); the sequence is GAPAPAPLAGQKPPADAA. Disordered regions lie at residues 2324-2370 and 2532-2568; these read GAPA…KQQE and PSSA…ACEL. Residues 2351–2476 adopt a coiled-coil conformation; sequence RPGFEKEEAS…EEQKQRQKAP (126 aa). Over residues 2353-2370 the composition is skewed to basic and acidic residues; it reads GFEKEEASQEERQRKQQE. Over residues 2533-2543 the composition is skewed to polar residues; the sequence is SSASDMSLQTE. Serine 2570 carries the phosphoserine modification. Residues threonine 2587 and threonine 2614 each carry the phosphothreonine modification. Positions 2601–2655 are disordered; the sequence is RRRARRSADCSVQTDDEDSAEWEQPVRRRRSRLPRHSDSGSDSKHDATASSSSAA. Residues 2635–2647 are compositionally biased toward basic and acidic residues; sequence RHSDSGSDSKHDA. O-linked (GlcNAc) threonine glycosylation occurs at threonine 2691. An interaction with DAO region spans residues 2721 to 3268; it reads EPDGQAQGVA…PGSSGRPGKE (548 aa). 3 positions are modified to phosphoserine: serine 2802, serine 2851, and serine 2857. Residues 2845–2865 are disordered; it reads TLQRSLSDPKPLSPTAEESAK. O-linked (GlcNAc) threonine glycosylation occurs at threonine 2936. Residues 2939 to 2981 are a coiled coil; it reads SLLRELDRDLRLVEHESTKLRKKQAELDEEEKEIDAKLKYLEL. Serine 3013 carries the post-translational modification Phosphoserine. Over residues 3039 to 3055 the composition is skewed to low complexity; sequence AAAPATPSGPTAFQQPR. Disordered regions lie at residues 3039-3375, 3424-3551, and 3572-3897; these read AAAP…FSPI, GMSS…PRAH, and EAYH…SVFS. Residues 3083–3095 are compositionally biased toward pro residues; it reads YPGPSTYPAPAFP. Over residues 3165 to 3176 the composition is skewed to low complexity; sequence ASPVVPMSSAPS. Over residues 3205-3228 the composition is skewed to polar residues; the sequence is SVSQSPAPTYPSDSHYTSLEQNVP. Residue serine 3291 is modified to Phosphoserine. 3 stretches are compositionally biased toward basic and acidic residues: residues 3321-3333, 3363-3375, and 3465-3477; these read GDSD…RVEK, QGME…FSPI, and GYER…ERLQ. Position 3373 is a phosphoserine (serine 3373). Arginine 3492 carries the omega-N-methylarginine modification. 4 stretches are compositionally biased toward basic and acidic residues: residues 3540–3551, 3583–3593, 3628–3647, and 3657–3681; these read VQEHVKDGPRAH, WFDKPRDARSD, LWPH…EHRH, and HTGE…EARP. Residues 3703–3712 are compositionally biased toward polar residues; sequence AEYSQPSRAS. Positions 3741 to 3807 are enriched in low complexity; it reads PQAQPQLQGR…RLQQQSQPTT (67 aa). Residue arginine 3808 is modified to Omega-N-methylarginine. Composition is skewed to low complexity over residues 3849–3860 and 3882–3892; these read AKAPQQGRAPQA and GAPAGQPGADG.

As to quaternary structure, interacts with PCLO, ERC2/CAST1, RIMS1 and UNC13A. Interacts with TPRG1L. Interacts with DYNLL1 and DYNLL2; these interactions potentially link PTVs to dynein and myosin V motor complexes. Interacts with ATG5; this interaction is important for the regulation of presynaptic autophagy. Interacts (via C-terminus) with TRIO (via N-terminus). Interacts with CTBP1. Interacts with SIAH1; this interaction negatively regulates SIAH1 E3 ligase activity. Interacts (via coiled region) with DAO; the interaction is direct. Myristoylated. The N-terminal myristoylation is not sufficient for presynaptic localization. As to expression, exclusively expressed in brain.

Its subcellular location is the cytoplasm. It localises to the presynaptic active zone. The protein localises to the cytoskeleton. It is found in the cytoplasmic vesicle. The protein resides in the secretory vesicle. Its subcellular location is the synaptic vesicle membrane. Scaffold protein of the presynaptic cytomatrix at the active zone (CAZ) which is the place in the synapse where neurotransmitter is released. After synthesis, participates in the formation of Golgi-derived membranous organelles termed Piccolo-Bassoon transport vesicles (PTVs) that are transported along axons to sites of nascent synaptic contacts. At the presynaptic active zone, regulates the spatial organization of synaptic vesicle cluster, the protein complexes that execute membrane fusion and compensatory endocytosis. Also functions in processes other than assembly such as the regulation of specific presynaptic protein ubiquitination by interacting with SIAH1 or the regulation of presynaptic autophagy by associating with ATG5. Also mediates synapse to nucleus communication leading to reconfiguration of gene expression by associating with the transcriptional corepressor CTBP1 and by subsequently reducing the size of its pool available for nuclear import. Inhibits the activity of the proportion of DAO enzyme that localizes to the presynaptic active zone, which may modulate synaptic transmission. The polypeptide is Protein bassoon (Homo sapiens (Human)).